The sequence spans 150 residues: Leukotriene C4 synthase (150 aa).

At 1-6 the chain is on the cytoplasmic side; sequence MKDEVA. A helical membrane pass occupies residues 7–27; sequence LLATVTLVGVLLQAYFSLQVI. Residues 28 to 48 are Lumenal-facing; it reads SARRAFHVSPPLTSGPPEFER. Arg30 contacts glutathione. The active-site Proton donor is the Arg31. Ser36 carries the phosphoserine modification. Residues 49–69 form a helical membrane-spanning segment; sequence VFRAQVNCSEYFPLFLATLWV. Residues 51 to 55, Gln53, and 58 to 59 contribute to the glutathione site; these read RAQVN and EY. At 70-73 the chain is on the cytoplasmic side; that stretch reads AGIF. Residues 74-94 traverse the membrane as a helical segment; sequence FHEGAAALCGLFYLFARLRYF. A glutathione-binding site is contributed by 93-97; it reads YFQGY. At 95–104 the chain is on the lumenal side; that stretch reads QGYARSAQLR. The Proton acceptor role is filled by Arg104. The helical transmembrane segment at 105–124 threads the bilayer; it reads LTPLYASARALWLLVAMAAL. The Cytoplasmic segment spans residues 125-150; sequence GLLVHFLPGTLRTALFRWLQMLLPMA.

This sequence belongs to the MAPEG family. Homotrimer. Interacts with ALOX5AP and ALOX5. In terms of processing, phosphorylation at Ser-36 by RPS6KB1 inhibits the leukotriene-C4 synthase activity. Widely expressed.

It localises to the nucleus outer membrane. The protein resides in the endoplasmic reticulum membrane. It is found in the nucleus membrane. The enzyme catalyses leukotriene C4 = leukotriene A4 + glutathione. It catalyses the reaction (13S,14S)-epoxy-(4Z,7Z,9E,11E,16Z,19Z)-docosahexaenoate + glutathione = (13R)-S-glutathionyl-(14S)-hydroxy-(4Z,7Z,9E,11E,16Z,19Z)-docosahexaenoate. The protein operates within lipid metabolism; leukotriene C4 biosynthesis. Inhibited by MK886. Catalyzes the conjugation of leukotriene A4 with reduced glutathione (GSH) to form leukotriene C4 with high specificity. Can also catalyze the transfer of a glutathionyl group from glutathione (GSH) to 13(S),14(S)-epoxy-docosahexaenoic acid to form maresin conjugate in tissue regeneration 1 (MCTR1), a bioactive lipid mediator that possess potent anti-inflammatory and proresolving actions. This chain is Leukotriene C4 synthase (Ltc4s), found in Mus musculus (Mouse).